Here is a 561-residue protein sequence, read N- to C-terminus: Putative transport protein YbjL (561 aa).

Transmembrane regions (helical) follow at residues 8–28, 32–52, 66–86, 94–114, and 158–178; these read LLNG…LCLG, LGSI…LLGQ, FMLF…SIFF, MLAL…GKLF, and NLSL…IVGA. 2 consecutive RCK C-terminal domains span residues 202-288 and 292-373; these read LDTD…SFRN and VFDR…RIGF. Transmembrane regions (helical) follow at residues 383–403, 406–426, 451–471, 475–495, and 540–560; these read LLAF…TFQF, FSFG…LGFM, VFMA…LGAI, MLVA…LFGA, and AIAN…WPGL.

It belongs to the AAE transporter (TC 2.A.81) family. YbjL subfamily.

The protein resides in the cell membrane. The polypeptide is Putative transport protein YbjL (Escherichia fergusonii (strain ATCC 35469 / DSM 13698 / CCUG 18766 / IAM 14443 / JCM 21226 / LMG 7866 / NBRC 102419 / NCTC 12128 / CDC 0568-73)).